We begin with the raw amino-acid sequence, 137 residues long: Large ribosomal subunit protein uL16 (137 aa).

The protein belongs to the universal ribosomal protein uL16 family. As to quaternary structure, part of the 50S ribosomal subunit.

Functionally, binds 23S rRNA and is also seen to make contacts with the A and possibly P site tRNAs. In Methylorubrum extorquens (strain CM4 / NCIMB 13688) (Methylobacterium extorquens), this protein is Large ribosomal subunit protein uL16.